The sequence spans 329 residues: NADH-quinone oxidoreductase subunit H (329 aa).

Helical transmembrane passes span leucine 9–isoleucine 29, glycine 42–phenylalanine 62, leucine 75–isoleucine 95, isoleucine 117–glycine 137, isoleucine 154–valine 174, glycine 188–alanine 208, leucine 238–isoleucine 258, tryptophan 269–tryptophan 291, and tryptophan 309–isoleucine 329.

It belongs to the complex I subunit 1 family. As to quaternary structure, NDH-1 is composed of 14 different subunits. Subunits NuoA, H, J, K, L, M, N constitute the membrane sector of the complex.

The protein resides in the cell inner membrane. The enzyme catalyses a quinone + NADH + 5 H(+)(in) = a quinol + NAD(+) + 4 H(+)(out). Its function is as follows. NDH-1 shuttles electrons from NADH, via FMN and iron-sulfur (Fe-S) centers, to quinones in the respiratory chain. The immediate electron acceptor for the enzyme in this species is believed to be ubiquinone. Couples the redox reaction to proton translocation (for every two electrons transferred, four hydrogen ions are translocated across the cytoplasmic membrane), and thus conserves the redox energy in a proton gradient. This subunit may bind ubiquinone. This is NADH-quinone oxidoreductase subunit H from Helicobacter acinonychis (strain Sheeba).